The sequence spans 444 residues: Probable glycine dehydrogenase (decarboxylating) subunit 1 (444 aa).

This sequence belongs to the GcvP family. N-terminal subunit subfamily. The glycine cleavage system is composed of four proteins: P, T, L and H. In this organism, the P 'protein' is a heterodimer of two subunits.

It carries out the reaction N(6)-[(R)-lipoyl]-L-lysyl-[glycine-cleavage complex H protein] + glycine + H(+) = N(6)-[(R)-S(8)-aminomethyldihydrolipoyl]-L-lysyl-[glycine-cleavage complex H protein] + CO2. Its function is as follows. The glycine cleavage system catalyzes the degradation of glycine. The P protein binds the alpha-amino group of glycine through its pyridoxal phosphate cofactor; CO(2) is released and the remaining methylamine moiety is then transferred to the lipoamide cofactor of the H protein. This chain is Probable glycine dehydrogenase (decarboxylating) subunit 1, found in Chlorobium phaeobacteroides (strain DSM 266 / SMG 266 / 2430).